Here is a 363-residue protein sequence, read N- to C-terminus: UDP-N-acetylglucosamine--N-acetylmuramyl-(pentapeptide) pyrophosphoryl-undecaprenol N-acetylglucosamine transferase (363 aa).

Residues 10-12 (TGG), Asn124, Ser195, Ile250, and Gln295 contribute to the UDP-N-acetyl-alpha-D-glucosamine site.

The protein belongs to the glycosyltransferase 28 family. MurG subfamily.

The protein localises to the cell membrane. It carries out the reaction di-trans,octa-cis-undecaprenyl diphospho-N-acetyl-alpha-D-muramoyl-L-alanyl-D-glutamyl-meso-2,6-diaminopimeloyl-D-alanyl-D-alanine + UDP-N-acetyl-alpha-D-glucosamine = di-trans,octa-cis-undecaprenyl diphospho-[N-acetyl-alpha-D-glucosaminyl-(1-&gt;4)]-N-acetyl-alpha-D-muramoyl-L-alanyl-D-glutamyl-meso-2,6-diaminopimeloyl-D-alanyl-D-alanine + UDP + H(+). It participates in cell wall biogenesis; peptidoglycan biosynthesis. Its function is as follows. Cell wall formation. Catalyzes the transfer of a GlcNAc subunit on undecaprenyl-pyrophosphoryl-MurNAc-pentapeptide (lipid intermediate I) to form undecaprenyl-pyrophosphoryl-MurNAc-(pentapeptide)GlcNAc (lipid intermediate II). This chain is UDP-N-acetylglucosamine--N-acetylmuramyl-(pentapeptide) pyrophosphoryl-undecaprenol N-acetylglucosamine transferase, found in Listeria welshimeri serovar 6b (strain ATCC 35897 / DSM 20650 / CCUG 15529 / CIP 8149 / NCTC 11857 / SLCC 5334 / V8).